Reading from the N-terminus, the 220-residue chain is Ribose-5-phosphate isomerase A (220 aa).

Substrate-binding positions include 28–31, 81–84, and 94–97; these read TGST, DGAD, and KGGG. E103 serves as the catalytic Proton acceptor. Substrate is bound at residue K121.

The protein belongs to the ribose 5-phosphate isomerase family. In terms of assembly, homodimer.

It carries out the reaction aldehydo-D-ribose 5-phosphate = D-ribulose 5-phosphate. It functions in the pathway carbohydrate degradation; pentose phosphate pathway; D-ribose 5-phosphate from D-ribulose 5-phosphate (non-oxidative stage): step 1/1. Its function is as follows. Catalyzes the reversible conversion of ribose-5-phosphate to ribulose 5-phosphate. This is Ribose-5-phosphate isomerase A from Vesicomyosocius okutanii subsp. Calyptogena okutanii (strain HA).